A 369-amino-acid polypeptide reads, in one-letter code: Anhydro-N-acetylmuramic acid kinase (369 aa).

Residue 12-19 (GTSLDGVD) participates in ATP binding.

It belongs to the anhydro-N-acetylmuramic acid kinase family.

It catalyses the reaction 1,6-anhydro-N-acetyl-beta-muramate + ATP + H2O = N-acetyl-D-muramate 6-phosphate + ADP + H(+). It functions in the pathway amino-sugar metabolism; 1,6-anhydro-N-acetylmuramate degradation. It participates in cell wall biogenesis; peptidoglycan recycling. Functionally, catalyzes the specific phosphorylation of 1,6-anhydro-N-acetylmuramic acid (anhMurNAc) with the simultaneous cleavage of the 1,6-anhydro ring, generating MurNAc-6-P. Is required for the utilization of anhMurNAc either imported from the medium or derived from its own cell wall murein, and thus plays a role in cell wall recycling. This chain is Anhydro-N-acetylmuramic acid kinase, found in Escherichia coli O139:H28 (strain E24377A / ETEC).